Here is a 144-residue protein sequence, read N- to C-terminus: Large ribosomal subunit protein uL15 (144 aa).

The interval 1 to 49 (MRLNTLSPAAGAKSAAKRVGRGIGSGTGKTCGRGHKGQKSRSGGGVRVG) is disordered. Over residues 21–31 (RGIGSGTGKTC) the composition is skewed to gly residues.

The protein belongs to the universal ribosomal protein uL15 family. In terms of assembly, part of the 50S ribosomal subunit.

In terms of biological role, binds to the 23S rRNA. This Shewanella sediminis (strain HAW-EB3) protein is Large ribosomal subunit protein uL15.